We begin with the raw amino-acid sequence, 50 residues long: Cytochrome c oxidase subunit 4 (50 aa).

Residues 2–17 lie on the Cytoplasmic side of the membrane; sequence ASHHEITDHKHGEMDI. A helical transmembrane segment spans residues 18–49; it reads RHQQATFAGFIKGATWVSILSIAVLVFLALAN. Ser-50 is a topological domain (periplasmic).

It is found in the cell inner membrane. It carries out the reaction 4 Fe(II)-[cytochrome c] + O2 + 8 H(+)(in) = 4 Fe(III)-[cytochrome c] + 2 H2O + 4 H(+)(out). Not required for enzymatic activity or proton pumping of the cytochrome c oxidase complex. This Paracoccus denitrificans protein is Cytochrome c oxidase subunit 4 (ctaH).